Here is a 527-residue protein sequence, read N- to C-terminus: DNA polymerase epsilon subunit 2 (527 aa).

The protein belongs to the DNA polymerase epsilon subunit B family. As to quaternary structure, component of the DNA polymerase epsilon complex consisting of four subunits: the catalytic subunit POLE and the accessory subunits POLE2, POLE3 and POLE4.

Its subcellular location is the nucleus. Functionally, accessory component of the DNA polymerase epsilon complex. Participates in DNA repair and in chromosomal DNA replication. The protein is DNA polymerase epsilon subunit 2 (Pole2) of Mus musculus (Mouse).